Here is a 575-residue protein sequence, read N- to C-terminus: Preprotein translocase subunit SCY2, chloroplastic (575 aa).

Residues 1-34 constitute a chloroplast transit peptide; it reads MNSSQACFFHFSLRPISLSHPSYAFLSKRDPFLC. The next 10 membrane-spanning stretches (helical) occupy residues 157 to 177, 206 to 226, 251 to 271, 285 to 305, 306 to 326, 346 to 366, 414 to 434, 447 to 467, 509 to 529, and 531 to 551; these read FVTA…LPGF, LSLF…MQVL, IWWL…YTSL, VMMT…LCDT, ISES…ILTG, LPYL…AVVV, TTYL…PFLL, GAPP…FNIF, FWGG…DHYL, and SINQ…GSII.

It belongs to the SecY/SEC61-alpha family. Part of a second Sec protein translocation apparatus. Interacts probably with SECA2. In terms of tissue distribution, ubiquitous.

It localises to the plastid. It is found in the chloroplast membrane. The protein localises to the amyloplast membrane. The protein resides in the chloroplast thylakoid membrane. In terms of biological role, involved in protein export. Probably interacts with other proteins to allow the postimport or conservative sorting pathway for inner membrane proteins in plastids. Central subunit of the protein translocation channel SecYE. Consists of two halves formed by TMs 1-5 and 6-10. These two domains form a lateral gate at the front which open onto the bilayer between TMs 2 and 7, and are clamped together by SecE at the back. The channel is closed by both a pore ring composed of hydrophobic SecY resides and a short helix (helix 2A) on the extracellular side of the membrane which forms a plug. The protein is Preprotein translocase subunit SCY2, chloroplastic (SCY2) of Arabidopsis thaliana (Mouse-ear cress).